The sequence spans 292 residues: Protein/nucleic acid deglycase HchA (292 aa).

Positions 1–12 (MSQDVNKLSKQP) are enriched in polar residues. The disordered stretch occupies residues 1 to 23 (MSQDVNKLSKQPTPDKAEDNAFF). Cys190 functions as the Nucleophile in the catalytic mechanism.

Belongs to the peptidase C56 family. HchA subfamily.

It is found in the cytoplasm. The catalysed reaction is N(omega)-(1-hydroxy-2-oxopropyl)-L-arginyl-[protein] + H2O = lactate + L-arginyl-[protein] + H(+). It catalyses the reaction N(6)-(1-hydroxy-2-oxopropyl)-L-lysyl-[protein] + H2O = lactate + L-lysyl-[protein] + H(+). The enzyme catalyses S-(1-hydroxy-2-oxopropyl)-L-cysteinyl-[protein] + H2O = lactate + L-cysteinyl-[protein] + H(+). It carries out the reaction N(omega)-(1-hydroxy-2-oxoethyl)-L-arginyl-[protein] + H2O = L-arginyl-[protein] + glycolate + H(+). The catalysed reaction is N(6)-(1-hydroxy-2-oxoethyl)-L-lysyl-[protein] + H2O = glycolate + L-lysyl-[protein] + H(+). It catalyses the reaction S-(1-hydroxy-2-oxoethyl)-L-cysteinyl-[protein] + H2O = glycolate + L-cysteinyl-[protein] + H(+). The enzyme catalyses N(2)-(1-hydroxy-2-oxopropyl)-dGTP + H2O = lactate + dGTP + H(+). It carries out the reaction N(2)-(1-hydroxy-2-oxopropyl)-GTP + H2O = lactate + GTP + H(+). The catalysed reaction is N(2)-(1-hydroxy-2-oxopropyl)-GDP + H2O = lactate + GDP + H(+). It catalyses the reaction N(2)-(1-hydroxy-2-oxopropyl)-GMP + H2O = lactate + GMP + H(+). The enzyme catalyses N(2)-(1-hydroxy-2-oxoethyl)-dGTP + H2O = dGTP + glycolate + H(+). It carries out the reaction N(2)-(1-hydroxy-2-oxoethyl)-GTP + H2O = glycolate + GTP + H(+). The catalysed reaction is N(2)-(1-hydroxy-2-oxoethyl)-GDP + H2O = glycolate + GDP + H(+). It catalyses the reaction N(2)-(1-hydroxy-2-oxoethyl)-GMP + H2O = glycolate + GMP + H(+). The enzyme catalyses an N(2)-(1-hydroxy-2-oxopropyl)-guanosine in RNA + H2O = a guanosine in RNA + lactate + H(+). It carries out the reaction an N(2)-(1-hydroxy-2-oxopropyl)-2'-deoxyguanosine in DNA + H2O = a 2'-deoxyguanosine in DNA + lactate + H(+). The catalysed reaction is an N(2)-(1-hydroxy-2-oxoethyl)-guanosine in RNA + H2O = a guanosine in RNA + glycolate + H(+). It catalyses the reaction an N(2)-(1-hydroxy-2-oxoethyl)-2'-deoxyguanosine in DNA + H2O = a 2'-deoxyguanosine in DNA + glycolate + H(+). Its function is as follows. Protein and nucleotide deglycase that catalyzes the deglycation of the Maillard adducts formed between amino groups of proteins or nucleotides and reactive carbonyl groups of glyoxals. Thus, functions as a protein deglycase that repairs methylglyoxal- and glyoxal-glycated proteins, and releases repaired proteins and lactate or glycolate, respectively. Deglycates cysteine, arginine and lysine residues in proteins, and thus reactivates these proteins by reversing glycation by glyoxals. Acts on early glycation intermediates (hemithioacetals and aminocarbinols), preventing the formation of Schiff bases and advanced glycation endproducts (AGE). Also functions as a nucleotide deglycase able to repair glycated guanine in the free nucleotide pool (GTP, GDP, GMP, dGTP) and in DNA and RNA. Is thus involved in a major nucleotide repair system named guanine glycation repair (GG repair), dedicated to reversing methylglyoxal and glyoxal damage via nucleotide sanitization and direct nucleic acid repair. Plays an important role in protecting cells from carbonyl stress. The protein is Protein/nucleic acid deglycase HchA of Staphylococcus aureus (strain MRSA252).